Here is a 363-residue protein sequence, read N- to C-terminus: Chorismate synthase (363 aa).

Residue Arg48 participates in NADP(+) binding. FMN is bound by residues 125–127, 238–239, Gly278, 293–297, and Arg319; these read RSS, NA, and KPTAS.

Belongs to the chorismate synthase family. Homotetramer. The cofactor is FMNH2.

The enzyme catalyses 5-O-(1-carboxyvinyl)-3-phosphoshikimate = chorismate + phosphate. It participates in metabolic intermediate biosynthesis; chorismate biosynthesis; chorismate from D-erythrose 4-phosphate and phosphoenolpyruvate: step 7/7. Catalyzes the anti-1,4-elimination of the C-3 phosphate and the C-6 proR hydrogen from 5-enolpyruvylshikimate-3-phosphate (EPSP) to yield chorismate, which is the branch point compound that serves as the starting substrate for the three terminal pathways of aromatic amino acid biosynthesis. This reaction introduces a second double bond into the aromatic ring system. The protein is Chorismate synthase of Acinetobacter baumannii (strain ACICU).